The following is a 100-amino-acid chain: Urease subunit gamma (100 aa).

It belongs to the urease gamma subunit family. Heterotrimer of UreA (gamma), UreB (beta) and UreC (alpha) subunits. Three heterotrimers associate to form the active enzyme.

It is found in the cytoplasm. The enzyme catalyses urea + 2 H2O + H(+) = hydrogencarbonate + 2 NH4(+). It functions in the pathway nitrogen metabolism; urea degradation; CO(2) and NH(3) from urea (urease route): step 1/1. In Acinetobacter baumannii (strain SDF), this protein is Urease subunit gamma.